The primary structure comprises 153 residues: Proline-rich membrane anchor 1 (153 aa).

An N-terminal signal peptide occupies residues Met-1 to Ala-35. Residues Glu-36 to Gly-92 are Extracellular-facing. The region spanning Pro-56 to Pro-70 is the PRAD domain. Over residues Pro-59–Arg-71 the composition is skewed to pro residues. Positions Pro-59–Asn-79 are disordered. A glycan (N-linked (GlcNAc...) asparagine) is linked at Asn-79. Residues Leu-93–Ile-113 form a helical membrane-spanning segment. Residues Cys-114–Val-153 lie on the Cytoplasmic side of the membrane. Residues Gly-129 to Val-153 form a disordered region.

In terms of assembly, interacts with ACHE, probably through disulfide bonds. In terms of tissue distribution, predominantly expressed in the central nervous system, including in the brain. Also expressed in muscle, heart and kidney. Isoform 1 may be predominant in the cortex and striatum, while isoform 2 is more abundant in the cerebellum.

It localises to the cell membrane. The protein localises to the cell junction. Its subcellular location is the synapse. Its function is as follows. Required to anchor acetylcholinesterase (ACHE) to the basal lamina of the neuromuscular junction and to the membrane of neuronal synapses in brain. Also able to organize ACHE into tetramers. This chain is Proline-rich membrane anchor 1 (Prima1), found in Mus musculus (Mouse).